The primary structure comprises 84 residues: MIIKNGEGESKIIGKAITLPTPKIFPQPFFIRLSEYTSEGNLWDNENFEFNSGKVECNGEDYDLAPSTCSLAKFDEDDGSKKLI.

It belongs to the csb family.

This is an uncharacterized protein from Dictyostelium discoideum (Social amoeba).